The sequence spans 244 residues: Haloacid dehalogenase-like hydrolase domain-containing protein Sgpp (244 aa).

The Nucleophile role is filled by D28. D28, D30, and D189 together coordinate Mg(2+). D30 serves as the catalytic Proton donor.

Belongs to the HAD-like hydrolase superfamily. DOG/GPP family. Requires Mg(2+) as cofactor. As to expression, ubiquitous with highest expression in flowers.

In terms of biological role, acts as a phosphosugar phosphatase on a broad range of sugar phosphate substrates with preferential activity on D-ribose-5-phosphate, 2-deoxy-D-ribose-5-phosphate, 2-deoxy-D-glucose-6-phosphate, and D-mannose-6-phosphate and with a lower activity on D-fructose-1-phosphate, D-glucose-6-phosphate, DL-glycerol-3-phosphate, and D-fructose-6-phosphate. The chain is Haloacid dehalogenase-like hydrolase domain-containing protein Sgpp (SGPP) from Arabidopsis thaliana (Mouse-ear cress).